The primary structure comprises 335 residues: Methionine aminopeptidase 1D, mitochondrial (335 aa).

A mitochondrion-targeting transit peptide spans 1–19; the sequence is MAAPIGVPLLVRGGCQRIL. Residue His161 participates in substrate binding. 3 residues coordinate a divalent metal cation: Asp178, Asp189, and His252. His259 contacts substrate. A divalent metal cation contacts are provided by Glu284 and Glu315.

This sequence belongs to the peptidase M24A family. Methionine aminopeptidase type 1 subfamily. The cofactor is Co(2+). Zn(2+) serves as cofactor. It depends on Mn(2+) as a cofactor. Fe(2+) is required as a cofactor.

It is found in the mitochondrion. It catalyses the reaction Release of N-terminal amino acids, preferentially methionine, from peptides and arylamides.. Functionally, removes the N-terminal methionine from nascent proteins. The N-terminal methionine is often cleaved when the second residue in the primary sequence is small and uncharged (Met-Ala-, Cys, Gly, Pro, Ser, Thr, or Val). Requires deformylation of the N(alpha)-formylated initiator methionine before it can be hydrolyzed. This Mus musculus (Mouse) protein is Methionine aminopeptidase 1D, mitochondrial (Metap1d).